Here is a 305-residue protein sequence, read N- to C-terminus: Ribonuclease BN (305 aa).

Zn(2+) is bound by residues His-64, His-66, Asp-68, His-69, His-141, Asp-212, and His-270. The active-site Proton acceptor is Asp-68.

This sequence belongs to the RNase Z family. RNase BN subfamily. In terms of assembly, homodimer. Zn(2+) is required as a cofactor.

Its function is as follows. Zinc phosphodiesterase, which has both exoribonuclease and endoribonuclease activities. The polypeptide is Ribonuclease BN (Escherichia coli O127:H6 (strain E2348/69 / EPEC)).